A 153-amino-acid polypeptide reads, in one-letter code: Endoribonuclease YbeY (153 aa).

Zn(2+) contacts are provided by H118, H122, and H128.

Belongs to the endoribonuclease YbeY family. The cofactor is Zn(2+).

The protein localises to the cytoplasm. Functionally, single strand-specific metallo-endoribonuclease involved in late-stage 70S ribosome quality control and in maturation of the 3' terminus of the 16S rRNA. This is Endoribonuclease YbeY from Staphylococcus carnosus (strain TM300).